Reading from the N-terminus, the 650-residue chain is Zinc finger CCCH domain-containing protein 55 (650 aa).

Positions asparagine 67–glycine 162 are disordered. Low complexity predominate over residues serine 105–asparagine 128. Over residues proline 141–histidine 154 the composition is skewed to polar residues. A C3H1-type zinc finger spans residues proline 232–tyrosine 254. One can recognise an RRM domain in the interval arginine 357–lysine 433. The segment at proline 566 to glutamine 650 is disordered. The span at alanine 581 to leucine 590 shows a compositional bias: basic and acidic residues.

In Arabidopsis thaliana (Mouse-ear cress), this protein is Zinc finger CCCH domain-containing protein 55.